The sequence spans 733 residues: Phosphoribosylformylglycinamidine synthase subunit PurL (733 aa).

H41 is a catalytic residue. The ATP site is built by Y44 and K83. Residue E85 participates in Mg(2+) binding. Residues 86–89 and R108 contribute to the substrate site; that span reads SHNH. The Proton acceptor role is filled by H87. D109 provides a ligand contact to Mg(2+). The interval 212–232 is disordered; sequence GASFASQELSEESEEKRPSVQ. Residue Q232 coordinates substrate. D260 contacts Mg(2+). 304–306 serves as a coordination point for substrate; it reads ESQ. ATP contacts are provided by D488 and G525. N526 serves as a coordination point for Mg(2+). S528 serves as a coordination point for substrate.

This sequence belongs to the FGAMS family. Monomer. Part of the FGAM synthase complex composed of 1 PurL, 1 PurQ and 2 PurS subunits.

It is found in the cytoplasm. The enzyme catalyses N(2)-formyl-N(1)-(5-phospho-beta-D-ribosyl)glycinamide + L-glutamine + ATP + H2O = 2-formamido-N(1)-(5-O-phospho-beta-D-ribosyl)acetamidine + L-glutamate + ADP + phosphate + H(+). It participates in purine metabolism; IMP biosynthesis via de novo pathway; 5-amino-1-(5-phospho-D-ribosyl)imidazole from N(2)-formyl-N(1)-(5-phospho-D-ribosyl)glycinamide: step 1/2. In terms of biological role, part of the phosphoribosylformylglycinamidine synthase complex involved in the purines biosynthetic pathway. Catalyzes the ATP-dependent conversion of formylglycinamide ribonucleotide (FGAR) and glutamine to yield formylglycinamidine ribonucleotide (FGAM) and glutamate. The FGAM synthase complex is composed of three subunits. PurQ produces an ammonia molecule by converting glutamine to glutamate. PurL transfers the ammonia molecule to FGAR to form FGAM in an ATP-dependent manner. PurS interacts with PurQ and PurL and is thought to assist in the transfer of the ammonia molecule from PurQ to PurL. The chain is Phosphoribosylformylglycinamidine synthase subunit PurL from Caldanaerobacter subterraneus subsp. tengcongensis (strain DSM 15242 / JCM 11007 / NBRC 100824 / MB4) (Thermoanaerobacter tengcongensis).